Here is a 427-residue protein sequence, read N- to C-terminus: Glutamate-1-semialdehyde 2,1-aminomutase 1 (427 aa).

Lys265 carries the post-translational modification N6-(pyridoxal phosphate)lysine.

The protein belongs to the class-III pyridoxal-phosphate-dependent aminotransferase family. HemL subfamily. In terms of assembly, homodimer. Pyridoxal 5'-phosphate serves as cofactor.

The protein resides in the cytoplasm. It carries out the reaction (S)-4-amino-5-oxopentanoate = 5-aminolevulinate. The protein operates within porphyrin-containing compound metabolism; protoporphyrin-IX biosynthesis; 5-aminolevulinate from L-glutamyl-tRNA(Glu): step 2/2. This is Glutamate-1-semialdehyde 2,1-aminomutase 1 from Lachnoclostridium phytofermentans (strain ATCC 700394 / DSM 18823 / ISDg) (Clostridium phytofermentans).